Consider the following 1090-residue polypeptide: Protein CHROMATIN REMODELING 24 (1090 aa).

Disordered regions lie at residues 1 to 51 and 247 to 273; these read MAEN…MIKL and VGKQ…NLDR. The short motif at 44–51 is the Nuclear localization signal element; the sequence is TKKSMIKL. The segment covering 256–273 has biased composition (basic and acidic residues); it reads RHFDDNSEDNRQGYNLDR. The 176-residue stretch at 389–564 folds into the Helicase ATP-binding domain; the sequence is WSLHTQGKGG…WALFNFSCPG (176 aa). An ATP-binding site is contributed by 402–409; that stretch reads DDMGLGKT. The short motif at 515-518 is the DEAH box element; the sequence is DEGH. The 160-residue stretch at 736-895 folds into the Helicase C-terminal domain; the sequence is FIMSLLENLI…IRYFSQQDLR (160 aa). A coiled-coil region spans residues 1043–1069; it reads DGGAKIQKQIAELTRELKDMKAAERIN.

It belongs to the SNF2/RAD54 helicase family.

The protein localises to the nucleus. Its function is as follows. DNA helicase that acts as an essential component of the spindle assembly checkpoint. Probable chromatin remodeling factor that regulate homologous recombination (HR) and non-homologous recombination (NHR). In Arabidopsis thaliana (Mouse-ear cress), this protein is Protein CHROMATIN REMODELING 24.